Reading from the N-terminus, the 462-residue chain is Ribosomal oxygenase 2 (462 aa).

Residues 1-24 (MPKKARPAGDGKEQGPAPKQVKVE) are disordered. Residues 139-271 (QPQRFKDELW…SSWGDFLLDT (133 aa)) enclose the JmjC domain. 3 residues coordinate Fe cation: histidine 179, aspartate 181, and histidine 240. The residue at position 308 (serine 308) is a Phosphoserine.

This sequence belongs to the ROX family. MINA53 subfamily. The cofactor is Fe(2+).

The protein resides in the nucleus. The protein localises to the nucleolus. The catalysed reaction is L-histidyl-[ribosomal protein uL15] + 2-oxoglutarate + O2 = (3S)-3-hydroxy-L-histidyl-[ribosomal protein uL15] + succinate + CO2. It catalyses the reaction L-histidyl-[protein] + 2-oxoglutarate + O2 = (3S)-3-hydroxy-L-histidyl-[protein] + succinate + CO2. In terms of biological role, oxygenase that can act as both a histone lysine demethylase and a ribosomal histidine hydroxylase. Is involved in the demethylation of trimethylated 'Lys-9' on histone H3 (H3K9me3), leading to an increase in ribosomal RNA expression. Also catalyzes the hydroxylation of 60S ribosomal protein L27a on 'His-39'. May play an important role in cell growth and survival. May be involved in ribosome biogenesis, most likely during the assembly process of pre-ribosomal particles. The sequence is that of Ribosomal oxygenase 2 (RIOX2) from Bos taurus (Bovine).